A 363-amino-acid chain; its full sequence is 3-dehydroquinate synthase (363 aa).

Residues 72-77 (SGEKEK), 130-131 (TT), Lys142, and Lys151 contribute to the NAD(+) site. Zn(2+) contacts are provided by Glu184, His247, and His264.

The protein belongs to the sugar phosphate cyclases superfamily. Dehydroquinate synthase family. It depends on Co(2+) as a cofactor. Requires Zn(2+) as cofactor. The cofactor is NAD(+).

It is found in the cytoplasm. It carries out the reaction 7-phospho-2-dehydro-3-deoxy-D-arabino-heptonate = 3-dehydroquinate + phosphate. It participates in metabolic intermediate biosynthesis; chorismate biosynthesis; chorismate from D-erythrose 4-phosphate and phosphoenolpyruvate: step 2/7. Functionally, catalyzes the conversion of 3-deoxy-D-arabino-heptulosonate 7-phosphate (DAHP) to dehydroquinate (DHQ). In Bacillus thuringiensis (strain Al Hakam), this protein is 3-dehydroquinate synthase.